We begin with the raw amino-acid sequence, 29 residues long: Potassium channel toxin alpha-KTx 20.1 (29 aa).

Disulfide bonds link Cys-2/Cys-20, Cys-7/Cys-24, and Cys-11/Cys-26.

This sequence belongs to the short scorpion toxin superfamily. Potassium channel inhibitor family. Alpha-KTx 20 subfamily. In terms of tissue distribution, expressed by the venom gland.

The protein localises to the secreted. Its function is as follows. Reduces potassium currents through Kv1.2/KCNA2 and Kv1.3/KCNA3 voltage-gated potassium channels. This Tityus trivittatus (Argentinean scorpion) protein is Potassium channel toxin alpha-KTx 20.1.